A 575-amino-acid chain; its full sequence is Septation ring formation regulator EzrA (575 aa).

Residues 1 to 8 (MSNGQLIY) lie on the Extracellular side of the membrane. A helical membrane pass occupies residues 9–27 (LMVAIAVILVLAYVVAIFL). Over 28 to 575 (RKRNEGRLEA…YEKTRETIRF (548 aa)) the chain is Cytoplasmic. Coiled coils occupy residues 105 to 191 (LKAS…FVTL), 265 to 301 (LYEAFKKNQENIRQLELDNAEYENGQAQEEINALYDI), 354 to 416 (VRRI…IEKD), and 456 to 526 (TASN…IQEA).

Belongs to the EzrA family.

Its subcellular location is the cell membrane. Functionally, negative regulator of FtsZ ring formation; modulates the frequency and position of FtsZ ring formation. Inhibits FtsZ ring formation at polar sites. Interacts either with FtsZ or with one of its binding partners to promote depolymerization. The sequence is that of Septation ring formation regulator EzrA from Streptococcus pneumoniae (strain ATCC BAA-255 / R6).